Here is a 114-residue protein sequence, read N- to C-terminus: Large ribosomal subunit protein bL20c (114 aa).

The protein belongs to the bacterial ribosomal protein bL20 family.

It is found in the plastid. Its subcellular location is the chloroplast. Its function is as follows. Binds directly to 23S ribosomal RNA and is necessary for the in vitro assembly process of the 50S ribosomal subunit. It is not involved in the protein synthesizing functions of that subunit. In Psilotum nudum (Whisk fern), this protein is Large ribosomal subunit protein bL20c.